The primary structure comprises 195 residues: Thymidylate kinase (195 aa).

7-14 serves as a coordination point for ATP; sequence GVDTCGKS.

It belongs to the thymidylate kinase family.

It catalyses the reaction dTMP + ATP = dTDP + ADP. In terms of biological role, phosphorylation of dTMP to form dTDP in both de novo and salvage pathways of dTTP synthesis. The sequence is that of Thymidylate kinase from Helicobacter hepaticus (strain ATCC 51449 / 3B1).